A 942-amino-acid polypeptide reads, in one-letter code: Chitin synthase 4 (942 aa).

Positions 1-124 are disordered; sequence MPPRYPFGGG…FDEHDGDVPL (124 aa). Residues 14 to 26 show a composition bias toward basic and acidic residues; that stretch reads DEAHHQPLERRTT. Residues 27–36 are compositionally biased toward polar residues; that stretch reads AEAQGNSFTH. Asparagine 604 carries N-linked (GlcNAc...) asparagine glycosylation. Helical transmembrane passes span 641–661, 674–694, 709–729, 755–775, 783–803, 885–905, and 909–929; these read TIQL…FFIL, VPNL…FLLS, AMVV…YLAV, IVIS…MFLE, IVQY…YAFA, VLCW…ISSI, and TIYM…RMMG.

It belongs to the chitin synthase family. Class I subfamily.

Its subcellular location is the cell membrane. The protein resides in the cytoplasmic vesicle membrane. It carries out the reaction [(1-&gt;4)-N-acetyl-beta-D-glucosaminyl](n) + UDP-N-acetyl-alpha-D-glucosamine = [(1-&gt;4)-N-acetyl-beta-D-glucosaminyl](n+1) + UDP + H(+). Polymerizes chitin, a structural polymer of the cell wall and septum, by transferring the sugar moiety of UDP-GlcNAc to the non-reducing end of the growing chitin polymer. The sequence is that of Chitin synthase 4 from Mycosarcoma maydis (Corn smut fungus).